We begin with the raw amino-acid sequence, 339 residues long: Dihydroorotate dehydrogenase (quinone) (339 aa).

FMN contacts are provided by residues 61–65 (AGLDK) and Thr85. Lys65 serves as a coordination point for substrate. 110–114 (NRMGF) is a binding site for substrate. Residues Asn138 and Asn171 each contribute to the FMN site. Asn171 contacts substrate. The active-site Nucleophile is the Ser174. Asn176 is a binding site for substrate. Residues Lys216 and Thr244 each coordinate FMN. Residue 245 to 246 (NT) coordinates substrate. FMN is bound by residues Gly267, Gly296, and 317–318 (YS).

The protein belongs to the dihydroorotate dehydrogenase family. Type 2 subfamily. As to quaternary structure, monomer. FMN serves as cofactor.

The protein localises to the cell membrane. It carries out the reaction (S)-dihydroorotate + a quinone = orotate + a quinol. It functions in the pathway pyrimidine metabolism; UMP biosynthesis via de novo pathway; orotate from (S)-dihydroorotate (quinone route): step 1/1. Functionally, catalyzes the conversion of dihydroorotate to orotate with quinone as electron acceptor. In Pseudomonas fluorescens (strain ATCC BAA-477 / NRRL B-23932 / Pf-5), this protein is Dihydroorotate dehydrogenase (quinone).